The sequence spans 427 residues: Peptidase B (427 aa).

The Mn(2+) site is built by K195 and D200. K207 is an active-site residue. 3 residues coordinate Mn(2+): D218, D277, and E279. R281 is a catalytic residue.

Belongs to the peptidase M17 family. In terms of assembly, homohexamer. Mn(2+) serves as cofactor.

The protein localises to the cytoplasm. It catalyses the reaction Release of an N-terminal amino acid, Xaa, from a peptide or arylamide. Xaa is preferably Glu or Asp but may be other amino acids, including Leu, Met, His, Cys and Gln.. In terms of biological role, probably plays an important role in intracellular peptide degradation. The sequence is that of Peptidase B from Escherichia coli O139:H28 (strain E24377A / ETEC).